Here is a 132-residue protein sequence, read N- to C-terminus: Holo-[acyl-carrier-protein] synthase (132 aa).

Asp-8 and Glu-64 together coordinate Mg(2+).

Belongs to the P-Pant transferase superfamily. AcpS family. The cofactor is Mg(2+).

The protein localises to the cytoplasm. The enzyme catalyses apo-[ACP] + CoA = holo-[ACP] + adenosine 3',5'-bisphosphate + H(+). Its function is as follows. Transfers the 4'-phosphopantetheine moiety from coenzyme A to a Ser of acyl-carrier-protein. The polypeptide is Holo-[acyl-carrier-protein] synthase (Shewanella woodyi (strain ATCC 51908 / MS32)).